A 323-amino-acid polypeptide reads, in one-letter code: Aldo-keto reductase family 1 member C13 (323 aa).

NAD(+) is bound by residues 20–24 (GFGTY), aspartate 50, and tyrosine 55. The active-site Proton donor is tyrosine 55. Histidine 117 provides a ligand contact to substrate. Residues 166 to 167 (SN), glutamine 190, 216 to 224 (YGALGTQRY), and 270 to 280 (QSFKENEMREN) contribute to the NAD(+) site.

This sequence belongs to the aldo/keto reductase family.

Functionally, catalyzes the dehydrogenation of 17-beta-hydroxysteroids. May also exhibit significant activity with a variety of cyclic and alicyclic alcohols. Uses both NAD and NADP, but the activity is much greater with NAD than with NADP. The polypeptide is Aldo-keto reductase family 1 member C13 (Akr1c13) (Mus musculus (Mouse)).